We begin with the raw amino-acid sequence, 838 residues long: DNA gyrase subunit A (838 aa).

An N-acetylthreonine modification is found at Thr-2. The region spanning 41-510 is the Topo IIA-type catalytic domain; it reads LPEVRDGLKP…ADGDVSDEDL (470 aa). The O-(5'-phospho-DNA)-tyrosine intermediate role is filled by Tyr-129. Residues Asp-504, Ser-506, Glu-508, and Asp-515 each coordinate Ca(2+). Positions 504–516 constitute an EF-hand domain; that stretch reads DVSDEDLIAREDV. The segment at 514-838 is C-terminal domain CTD; sequence EDVVVTITET…DANGADQTGN (325 aa). The short motif at 537-543 is the GyrA-box element; it reads QKRGGKG. The GyrA-box-1 signature appears at 743 to 749; it reads QGRGGKG.

This sequence belongs to the type II topoisomerase GyrA/ParC subunit family. As to quaternary structure, heterotetramer, composed of two GyrA and two GyrB chains. In the heterotetramer, GyrA contains the active site tyrosine that forms a transient covalent intermediate with DNA, while GyrB binds cofactors and catalyzes ATP hydrolysis. The cofactor is Ca(2+).

The protein resides in the cytoplasm. It catalyses the reaction ATP-dependent breakage, passage and rejoining of double-stranded DNA.. DNA supercoiling inhibited by (fluoro)quinoline antibiotics such as sparfloxacin and levofloxacin, which usually act on GyrA. DNA supercoiling inhibited by the coumarin antibiotic novobiocin which acts on GyrB. Quinolones lead to gyrase-mediated dsDNA cleavage while preventing reclosure. DNA supercoiling activity inhibited by aminopyrazinamide and pyrrolamide derivatives, probably via effects on the GyrB subunit. DNA relaxation inhibited by ATP and its analogs. DNA supercoiling, relaxation, decatenation and quinolone-promoted DNA cleavage are inhibited by MfpA (50% inhibition occurs at 2 uM), inhibition of gyrase activities is enhanced in a concentration-dependent manner by MfpA. Its function is as follows. A type II topoisomerase that negatively supercoils closed circular double-stranded (ds) DNA in an ATP-dependent manner to maintain chromosomes in an underwound state, while in the absence of ATP it relaxes supercoiled dsDNA. Also catalyzes the interconversion of other topological isomers of dsDNA rings, including catenanes. Gyrase from M.tuberculosis has higher decatenation than supercoiling activity compared to E.coli; as M.tuberculosis only has 1 type II topoisomerase, gyrase has to fulfill the decatenation function of topoisomerase IV as well. At comparable concentrations M.tuberculosis gyrase cannot introduce as many negative supercoils into DNA as the E.coli enzyme, and its ATPase activity is lower, perhaps because it does not couple DNA wrapping and ATP binding as well as E.coli. Functionally, negative supercoiling favors strand separation, and DNA replication, transcription, recombination and repair, all of which involve strand separation. Type II topoisomerases break and join 2 DNA strands simultaneously in an ATP-dependent manner. The sequence is that of DNA gyrase subunit A from Mycobacterium tuberculosis (strain ATCC 25618 / H37Rv).